The primary structure comprises 1268 residues: Vigilin (1268 aa).

Ser-2 carries the N-acetylserine modification. Thr-8 carries the phosphothreonine modification. A phosphoserine mark is found at Ser-11, Ser-31, and Ser-35. 14 KH domains span residues 158-229, 230-302, 303-371, 372-442, 443-514, 515-588, 589-660, 661-734, 735-807, 808-880, 881-979, 980-1059, 1060-1134, and 1135-1209; these read PKEH…RLEV, EKAF…AVEV, KKSQ…SVAA, PSWL…EINI, DHKF…DLII, EQRF…SVPI, FKQF…EVSI, PAKL…DIRA, KPEY…SMLV, DPKH…ECAI, PQKF…EVEV, PFDL…SVTV, DPKY…DVPL, and DHRV…ALQV. A phosphothreonine mark is found at Thr-295 and Thr-296. Ser-317 bears the Phosphoserine mark. The residue at position 437 (Tyr-437) is a Phosphotyrosine. Ser-645 is modified (phosphoserine). Residues 910-947 are disordered; sequence PDREENPVHSTEPAVQENGDEAGEGREAKDSDPGSPRR. Positions 932–947 are enriched in basic and acidic residues; sequence GEGREAKDSDPGSPRR. At Lys-991 the chain carries N6-acetyllysine. The segment covering 1237-1249 has biased composition (polar residues); that stretch reads SSEKAPDMSSSEE. A disordered region spans residues 1237–1268; it reads SSEKAPDMSSSEEFPSFGAQVAPKTLPWGPKR. Phosphoserine occurs at positions 1247 and 1252.

Its subcellular location is the cytoplasm. The protein localises to the nucleus. Appears to play a role in cell sterol metabolism. It may function to protect cells from over-accumulation of cholesterol. The polypeptide is Vigilin (HDLBP) (Pongo abelii (Sumatran orangutan)).